Here is a 202-residue protein sequence, read N- to C-terminus: NADH-quinone oxidoreductase subunit C (202 aa).

The protein belongs to the complex I 30 kDa subunit family. In terms of assembly, NDH-1 is composed of 14 different subunits. Subunits NuoB, C, D, E, F, and G constitute the peripheral sector of the complex.

It localises to the cell inner membrane. It carries out the reaction a quinone + NADH + 5 H(+)(in) = a quinol + NAD(+) + 4 H(+)(out). Functionally, NDH-1 shuttles electrons from NADH, via FMN and iron-sulfur (Fe-S) centers, to quinones in the respiratory chain. The immediate electron acceptor for the enzyme in this species is believed to be ubiquinone. Couples the redox reaction to proton translocation (for every two electrons transferred, four hydrogen ions are translocated across the cytoplasmic membrane), and thus conserves the redox energy in a proton gradient. The sequence is that of NADH-quinone oxidoreductase subunit C from Bartonella quintana (strain Toulouse) (Rochalimaea quintana).